We begin with the raw amino-acid sequence, 319 residues long: Phospho-N-acetylmuramoyl-pentapeptide-transferase (319 aa).

10 helical membrane-spanning segments follow: residues 1-21 (MSIL…FLLM), 53-73 (TMGG…VGAW), 77-97 (LNGT…IGMW), 117-137 (FLAQ…EGFQ), 140-160 (FGLT…MVGF), 172-192 (GLVT…ALVQ), 195-215 (TEVA…FPFN), 221-241 (IFMG…VALV), 249-269 (LIIG…VAYF), and 298-318 (GVFW…ILFL).

The protein belongs to the glycosyltransferase 4 family. MraY subfamily. Mg(2+) serves as cofactor.

Its subcellular location is the cell membrane. It catalyses the reaction UDP-N-acetyl-alpha-D-muramoyl-L-alanyl-gamma-D-glutamyl-L-lysyl-D-alanyl-D-alanine + di-trans,octa-cis-undecaprenyl phosphate = Mur2Ac(oyl-L-Ala-gamma-D-Glu-L-Lys-D-Ala-D-Ala)-di-trans,octa-cis-undecaprenyl diphosphate + UMP. Its pathway is cell wall biogenesis; peptidoglycan biosynthesis. Its function is as follows. Catalyzes the initial step of the lipid cycle reactions in the biosynthesis of the cell wall peptidoglycan: transfers peptidoglycan precursor phospho-MurNAc-pentapeptide from UDP-MurNAc-pentapeptide onto the lipid carrier undecaprenyl phosphate, yielding undecaprenyl-pyrophosphoryl-MurNAc-pentapeptide, known as lipid I. The protein is Phospho-N-acetylmuramoyl-pentapeptide-transferase of Limosilactobacillus fermentum (strain NBRC 3956 / LMG 18251) (Lactobacillus fermentum).